Consider the following 663-residue polypeptide: Telomere length regulator taz1 (663 aa).

The segment at 15–72 (ENEGDQQFDKEVVQNSDSNIETGQISDSLTKAVEERAETESSSNLSNFTTSESESSKP) is disordered. Polar residues-rich tracts occupy residues 27-43 (VQNSDSNIETGQISDSL) and 54-67 (ESSSNLSNFTTSES). Serine 332 carries the phosphoserine modification. Disordered stretches follow at residues 389 to 412 (GSTAQSADEASGHESDASEDTFSE) and 471 to 554 (RAKS…PYEG). 2 stretches are compositionally biased toward basic and acidic residues: residues 489 to 498 (KRGDNLRREA) and 512 to 524 (PPVRESDEQESRS). In terms of domain architecture, Myb-like spans 556 to 612 (RTRRKWTDEEENELYEMISQHGCCWSKIIHIQKLENGPLKTFGPTQIKDKARLIKAR).

As to quaternary structure, interacts with taf1 via the Myb domain, and ccq1.

The protein resides in the cytoplasm. Its subcellular location is the nucleus. It localises to the chromosome. It is found in the telomere. In terms of biological role, regulates telomere length and function. Required for the repression of telomere-adjacent gene expression and for normal meiosis or sporulation. It may be a negative regulator of the telomere-replicating enzyme, telomerase, or may protect against activation of telomerase-independent pathways of telomere elongation. It may be involved in the interactions between chromosomes and spindle proteins, disruption of these interactions would lead to defective meiosis. The chain is Telomere length regulator taz1 (taz1) from Schizosaccharomyces pombe (strain 972 / ATCC 24843) (Fission yeast).